Here is a 557-residue protein sequence, read N- to C-terminus: Urease subunit alpha (557 aa).

Residues 130–557 (GFIDTHIHWV…LPLTQLYFIY (428 aa)) enclose the Urease domain. Ni(2+)-binding residues include H135, H137, and K217. K217 carries the post-translational modification N6-carboxylysine. H219 is a binding site for substrate. 2 residues coordinate Ni(2+): H246 and H272. The active-site Proton donor is the H320. D360 lines the Ni(2+) pocket.

The protein belongs to the metallo-dependent hydrolases superfamily. Urease alpha subunit family. Heterohexamer of 3 UreC (alpha) and 3 UreAB (gamma/beta) subunits. The cofactor is Ni cation. Post-translationally, carboxylation allows a single lysine to coordinate two nickel ions.

The protein resides in the cytoplasm. It catalyses the reaction urea + 2 H2O + H(+) = hydrogencarbonate + 2 NH4(+). Its pathway is nitrogen metabolism; urea degradation; CO(2) and NH(3) from urea (urease route): step 1/1. In Sulfurisphaera tokodaii (strain DSM 16993 / JCM 10545 / NBRC 100140 / 7) (Sulfolobus tokodaii), this protein is Urease subunit alpha.